A 227-amino-acid chain; its full sequence is Glial cell line-derived neurotrophic factor (227 aa).

The first 19 residues, 1 to 19 (MKLWAILAVCILLLSSVSS), serve as a signal peptide directing secretion. Positions 20-93 (IPLPSNWLAG…EFIQDTIKRL (74 aa)) are excised as a propeptide. Disordered regions lie at residues 32 to 61 (RSHLPDPQEGEDQVFGMDGAVPEDPTANMA) and 93 to 113 (LKRSSNKQPPSRRDRGRQSLA). Intrachain disulfides connect cysteine 134–cysteine 195, cysteine 161–cysteine 224, and cysteine 165–cysteine 226. Asparagine 142 and asparagine 178 each carry an N-linked (GlcNAc...) asparagine glycan.

It belongs to the TGF-beta family. GDNF subfamily. As to quaternary structure, homodimer; disulfide-linked. Interacts with GFRA1 coreceptor and RET: forms a 2:2:2 ternary complex composed of GDNF ligand, GFRA1 and RET receptor. From stage 22, expressed in somites and the pronephros. At stage 24 and 26, expressed in the pharyngeal arches I-III. At stage 31, expression in the eye, central nervous system and pharyngeal arches IV and V increases. Up to stage 34, expression becomes intense at the oral cavity and lateral line structures. At this stage, expression weakens in the pharyngeal arches, and increases in the epibranchial arches. Expressed in the digestive tract in stage 34 embryos.

It localises to the secreted. Functionally, neurotrophic factor that enhances survival and morphological differentiation of dopaminergic neurons and increases their high-affinity dopamine uptake. Acts by binding to its coreceptor, GFRA1, leading to autophosphorylation and activation of the RET receptor. In Xenopus laevis (African clawed frog), this protein is Glial cell line-derived neurotrophic factor.